We begin with the raw amino-acid sequence, 145 residues long: Hemoglobin subunit beta-A (145 aa).

The Globin domain occupies 1–145 (MLTAEEKAAV…VANALAHRYH (145 aa)). Positions 62 and 91 each coordinate heme b.

Belongs to the globin family. In terms of assembly, heterotetramer of two alpha chains and two beta chains. Red blood cells.

Functionally, involved in oxygen transport from the lung to the various peripheral tissues. The chain is Hemoglobin subunit beta-A from Capra hircus (Goat).